The primary structure comprises 465 residues: Protein hedgehog (465 aa).

The N-palmitoyl cysteine moiety is linked to residue Cys79. Glu143, Glu144, Asp149, Thr179, Glu180, Asp183, and Asp185 together coordinate Ca(2+). Gly251 carries the Cholesterol glycine ester lipid modification.

Belongs to the hedgehog family. In terms of assembly, interacts with shf. The C-terminal part of the hedgehog protein precursor displays an autoproteolysis activity that results in the cleavage of the full-length protein into two parts (N-product and C-product). In addition, the C-terminal part displays a cholesterol transferase activity that results by the covalent attachment of a cholesterol moiety to the C-terminal of the newly generated N-product. The N-product is the active species in both local and long-range signaling, whereas the C-product has no signaling activity. In terms of processing, cholesterylation is required for N-product targeting to lipid rafts and multimerization. Post-translationally, N-palmitoylation by Rasp of the hedgehog N-product, within the secretory pathway, is required for the embryonic and larval patterning activities of the hedgehog signal.

The protein localises to the nucleus. The protein resides in the cytoplasm. Its subcellular location is the cell membrane. The enzyme catalyses glycyl-L-cysteinyl-[protein] + cholesterol + H(+) = [protein]-C-terminal glycyl cholesterol ester + N-terminal L-cysteinyl-[protein]. Its function is as follows. The C-terminal part of the hedgehog protein precursor displays an autoproteolysis activity that results in the cleavage of the full-length protein into two parts (N-product and C-product). In addition, the C-terminal part displays a cholesterol transferase activity that results by the covalent attachment of a cholesterol moiety to the C-terminal of the newly generated N-product. Once cleaved, the C-product has no signaling activity and diffuses from the cell. In terms of biological role, the dually lipidated hedgehog protein N-product is a morphogen which is essential for a variety of patterning events during development. Establishes the anterior-posterior axis of the embryonic segments and patterns the larval imaginal disks. Binds to the patched (ptc) receptor, which functions in association with smoothened (smo), to activate the transcription of target genes wingless (wg), decapentaplegic (dpp) and ptc. In the absence of hh, ptc represses the constitutive signaling activity of smo through fused (fu). Essential component of a signaling pathway which regulates the Duox-dependent gut immune response to bacterial uracil; required to activate Cad99C-dependent endosome formation, norpA-dependent Ca2+ mobilization and p38 MAPK, which are essential steps in the Duox-dependent production of reactive oxygen species (ROS) in response to intestinal bacterial infection. During photoreceptor differentiation, it up-regulates transcription of Ubr3, which in turn promotes the hh-signaling pathway by mediating the ubiquitination and degradation of cos. This Drosophila yakuba (Fruit fly) protein is Protein hedgehog.